The sequence spans 615 residues: Putative DNA ligase 205R (615 aa).

K101 serves as the catalytic N6-AMP-lysine intermediate.

Belongs to the NAD-dependent DNA ligase family.

It catalyses the reaction NAD(+) + (deoxyribonucleotide)n-3'-hydroxyl + 5'-phospho-(deoxyribonucleotide)m = (deoxyribonucleotide)n+m + AMP + beta-nicotinamide D-nucleotide.. In terms of biological role, catalyzes the formation of phosphodiester linkages between 5'-phosphoryl and 3'-hydroxyl groups in double-stranded DNA using NAD as a coenzyme and as the energy source for the reaction. In Invertebrate iridescent virus 6 (IIV-6), this protein is Putative DNA ligase 205R.